Consider the following 449-residue polypeptide: Histidinol dehydrogenase (449 aa).

Residues tyrosine 135, glutamine 199, and asparagine 229 each contribute to the NAD(+) site. Substrate is bound by residues threonine 252, glutamine 274, and histidine 277. The Zn(2+) site is built by glutamine 274 and histidine 277. Active-site proton acceptor residues include glutamate 343 and histidine 344. Residues histidine 344, aspartate 377, glutamate 431, and histidine 436 each contribute to the substrate site. Residue aspartate 377 coordinates Zn(2+). Zn(2+) is bound at residue histidine 436.

The protein belongs to the histidinol dehydrogenase family. Zn(2+) is required as a cofactor.

The catalysed reaction is L-histidinol + 2 NAD(+) + H2O = L-histidine + 2 NADH + 3 H(+). It functions in the pathway amino-acid biosynthesis; L-histidine biosynthesis; L-histidine from 5-phospho-alpha-D-ribose 1-diphosphate: step 9/9. In terms of biological role, catalyzes the sequential NAD-dependent oxidations of L-histidinol to L-histidinaldehyde and then to L-histidine. The sequence is that of Histidinol dehydrogenase from Corynebacterium diphtheriae (strain ATCC 700971 / NCTC 13129 / Biotype gravis).